A 344-amino-acid polypeptide reads, in one-letter code: Arginine N-succinyltransferase (344 aa).

Leu-125 provides a ligand contact to succinyl-CoA. His-229 (proton donor) is an active-site residue.

This sequence belongs to the arginine N-succinyltransferase family.

It carries out the reaction succinyl-CoA + L-arginine = N(2)-succinyl-L-arginine + CoA + H(+). It participates in amino-acid degradation; L-arginine degradation via AST pathway; L-glutamate and succinate from L-arginine: step 1/5. In terms of biological role, catalyzes the transfer of succinyl-CoA to arginine to produce N(2)-succinylarginine. The sequence is that of Arginine N-succinyltransferase from Escherichia coli O127:H6 (strain E2348/69 / EPEC).